The primary structure comprises 325 residues: Methionyl-tRNA formyltransferase (325 aa).

Position 112–115 (112–115) interacts with (6S)-5,6,7,8-tetrahydrofolate; that stretch reads SLLP.

This sequence belongs to the Fmt family.

The enzyme catalyses L-methionyl-tRNA(fMet) + (6R)-10-formyltetrahydrofolate = N-formyl-L-methionyl-tRNA(fMet) + (6S)-5,6,7,8-tetrahydrofolate + H(+). In terms of biological role, attaches a formyl group to the free amino group of methionyl-tRNA(fMet). The formyl group appears to play a dual role in the initiator identity of N-formylmethionyl-tRNA by promoting its recognition by IF2 and preventing the misappropriation of this tRNA by the elongation apparatus. The polypeptide is Methionyl-tRNA formyltransferase (Roseiflexus sp. (strain RS-1)).